A 367-amino-acid chain; its full sequence is NADH-quinone oxidoreductase subunit D (367 aa).

This sequence belongs to the complex I 49 kDa subunit family. In terms of assembly, NDH-1 is composed of 14 different subunits. Subunits NuoB, C, D, E, F, and G constitute the peripheral sector of the complex.

Its subcellular location is the cell membrane. The catalysed reaction is a quinone + NADH + 5 H(+)(in) = a quinol + NAD(+) + 4 H(+)(out). In terms of biological role, NDH-1 shuttles electrons from NADH, via FMN and iron-sulfur (Fe-S) centers, to quinones in the respiratory chain. The immediate electron acceptor for the enzyme in this species is believed to be a menaquinone. Couples the redox reaction to proton translocation (for every two electrons transferred, four hydrogen ions are translocated across the cytoplasmic membrane), and thus conserves the redox energy in a proton gradient. In Geobacillus kaustophilus (strain HTA426), this protein is NADH-quinone oxidoreductase subunit D.